Here is a 370-residue protein sequence, read N- to C-terminus: (5-formylfuran-3-yl)methyl phosphate transaminase (370 aa).

K222 is subject to N6-(pyridoxal phosphate)lysine.

It belongs to the class-I pyridoxal-phosphate-dependent aminotransferase family. As to quaternary structure, homodimer. The cofactor is pyridoxal 5'-phosphate.

It localises to the cytoplasm. The catalysed reaction is 4-(hydroxymethyl)-2-furancarboxaldehyde phosphate + L-alanine = [5-(aminomethyl)-3-furyl]methyl phosphate + pyruvate. Its pathway is cofactor biosynthesis; methanofuran biosynthesis. Catalyzes the transamination reaction between 4-(hydroxymethyl)-2-furancarboxaldehyde phosphate (4-HFC-P) and alanine to produce pyruvate and 5-(aminomethyl)-3-furanmethanol phosphate (F1-P), the precursor for the furan moiety in methanofuran. This is (5-formylfuran-3-yl)methyl phosphate transaminase from Methanocaldococcus jannaschii (strain ATCC 43067 / DSM 2661 / JAL-1 / JCM 10045 / NBRC 100440) (Methanococcus jannaschii).